A 194-amino-acid polypeptide reads, in one-letter code: dCTP deaminase (194 aa).

DCTP is bound by residues 110–115 (RSSLAR), Asp-128, 136–138 (VLE), Tyr-171, Lys-178, and Gln-182. Residue Glu-138 is the Proton donor/acceptor of the active site.

Belongs to the dCTP deaminase family. Homotrimer.

It catalyses the reaction dCTP + H2O + H(+) = dUTP + NH4(+). The protein operates within pyrimidine metabolism; dUMP biosynthesis; dUMP from dCTP (dUTP route): step 1/2. Functionally, catalyzes the deamination of dCTP to dUTP. The protein is dCTP deaminase of Psychromonas ingrahamii (strain DSM 17664 / CCUG 51855 / 37).